Here is a 268-residue protein sequence, read N- to C-terminus: Tryptophan synthase alpha chain (268 aa).

Residues Glu49 and Asp60 each act as proton acceptor in the active site.

This sequence belongs to the TrpA family. In terms of assembly, tetramer of two alpha and two beta chains.

It carries out the reaction (1S,2R)-1-C-(indol-3-yl)glycerol 3-phosphate + L-serine = D-glyceraldehyde 3-phosphate + L-tryptophan + H2O. It participates in amino-acid biosynthesis; L-tryptophan biosynthesis; L-tryptophan from chorismate: step 5/5. Its function is as follows. The alpha subunit is responsible for the aldol cleavage of indoleglycerol phosphate to indole and glyceraldehyde 3-phosphate. This Shigella dysenteriae serotype 1 (strain Sd197) protein is Tryptophan synthase alpha chain.